Reading from the N-terminus, the 825-residue chain is IQ and AAA domain-containing protein 1-like (825 aa).

The IQ domain occupies 206–235 (RDQGAIVIQKVWKGYLQRKRIEQDRRVEME). Basic and acidic residues predominate over residues 344-366 (QAQESRKKDQEKKEKNKEKEKEK). Disordered regions lie at residues 344 to 378 (QAQE…KEEK) and 459 to 487 (DREE…KDLT). The span at 467–482 (KSPKKKGGKKSGKKKK) shows a compositional bias: basic residues. 572-579 (GPSGMGKK) provides a ligand contact to ATP.

The protein belongs to the AAA ATPase family.

In Mus musculus (Mouse), this protein is IQ and AAA domain-containing protein 1-like (Iqca1l).